The sequence spans 502 residues: MTLPLLSVSSDRAVDVEADALVVAVSSEKEGLRVHAPEGLEFDADGLSDIGVTGGRDEVVRIAGTGTAARTIAFVGVGSGPVDAVALRYAVGSATRQLRGVAHVAVAVPVSSLVDLTAVLEGAALGTYSFDAYRRDSLAGQKPRATAVTVLAQGDSWTADDADEAVAHATAVAGAVAGTKDLVNTPPLDLYPATFVDAVHERTAGLPVDVRVWDEVALAADGFGGILGVGQGSTRPPRLVKVAYSPAGATRHLALVGKGITYDTGGISLKPAVPMIGMKYDMTGAATILEVVVAAARLELPVRLTAWLCIAENMPSGSAIRPDDVLRMRGGTTVEVLNTDAEGRLVMADGIVAASEEHPDAIVDIATLTGAQVVALGERYSAVMGEDALVARLLDAAREQGESMWGMPLPEEMRALLNSDIADIANVKPGNPAGGMLVAGVFLKEFVGRTGDEDDAPRIPWAHVDIAGPSHNKGGGHGFTGKGPTGVAVRTLLALAAGFSRA.

Mn(2+)-binding residues include K258 and D263. Residue K270 is part of the active site. 3 residues coordinate Mn(2+): D281, D340, and E342. Residue R344 is part of the active site.

The protein belongs to the peptidase M17 family. Mn(2+) is required as a cofactor.

Its subcellular location is the cytoplasm. The enzyme catalyses Release of an N-terminal amino acid, Xaa-|-Yaa-, in which Xaa is preferably Leu, but may be other amino acids including Pro although not Arg or Lys, and Yaa may be Pro. Amino acid amides and methyl esters are also readily hydrolyzed, but rates on arylamides are exceedingly low.. The catalysed reaction is Release of an N-terminal amino acid, preferentially leucine, but not glutamic or aspartic acids.. Functionally, presumably involved in the processing and regular turnover of intracellular proteins. Catalyzes the removal of unsubstituted N-terminal amino acids from various peptides. In Clavibacter michiganensis subsp. michiganensis (strain NCPPB 382), this protein is Probable cytosol aminopeptidase.